The sequence spans 274 residues: MAKGPVATSSDDELPFETEEPVADERSFFGGRPQKPAARNLRPALTASLAAPEHYHGHRERLRDRFRELGDTALADYEILELLLFRLIPRRDTKPIAKALIERFGSLAGVFGAPAALLTEVKGVGENVALDLKLIATVAHRTLKSEIRSKQVLSSWSSVIQYCHAAMAHETREQFRILFLDKRNVLIADEVQGRGTVDHTPVYPREVVKRALELSATAIILVHNHPSGDPTPSRADIDMTKVIIEAAKALDITVHDHIIIGKDGHVSLKGLKLI.

The tract at residues 1-37 (MAKGPVATSSDDELPFETEEPVADERSFFGGRPQKPA) is disordered. Over residues 10-22 (SDDELPFETEEPV) the composition is skewed to acidic residues. In terms of domain architecture, MPN spans 152–274 (VLSSWSSVIQ…HVSLKGLKLI (123 aa)). Zn(2+)-binding residues include H223, H225, and D236. The JAMM motif motif lies at 223–236 (HNHPSGDPTPSRAD).

Belongs to the UPF0758 family.

The sequence is that of UPF0758 protein RHE_CH01848 from Rhizobium etli (strain ATCC 51251 / DSM 11541 / JCM 21823 / NBRC 15573 / CFN 42).